Reading from the N-terminus, the 260-residue chain is Ribosomal RNA small subunit methyltransferase J (260 aa).

Residues 101–102 (RD), 117–118 (ER), 153–154 (SS), and D176 each bind S-adenosyl-L-methionine.

Belongs to the methyltransferase superfamily. RsmJ family.

It localises to the cytoplasm. It catalyses the reaction guanosine(1516) in 16S rRNA + S-adenosyl-L-methionine = N(2)-methylguanosine(1516) in 16S rRNA + S-adenosyl-L-homocysteine + H(+). Its function is as follows. Specifically methylates the guanosine in position 1516 of 16S rRNA. This chain is Ribosomal RNA small subunit methyltransferase J, found in Aliivibrio salmonicida (strain LFI1238) (Vibrio salmonicida (strain LFI1238)).